Here is a 257-residue protein sequence, read N- to C-terminus: Ribonuclease HII (257 aa).

Residues 72–257 form the RNase H type-2 domain; the sequence is TYIAGIDEVG…FAPIKDMIQK (186 aa). Residues aspartate 78, glutamate 79, and aspartate 170 each coordinate a divalent metal cation.

Belongs to the RNase HII family. Mn(2+) serves as cofactor. Mg(2+) is required as a cofactor.

It localises to the cytoplasm. It carries out the reaction Endonucleolytic cleavage to 5'-phosphomonoester.. Its function is as follows. Endonuclease that specifically degrades the RNA of RNA-DNA hybrids. The chain is Ribonuclease HII from Bacillus cereus (strain ATCC 10987 / NRS 248).